The sequence spans 2594 residues: Protein sevenless (2594 aa).

Disordered stretches follow at residues 1-34 and 49-92; these read MFWR…PKRL and KMST…RVRR. Over 1–2141 the chain is Extracellular; the sequence is MFWREDAAQQ…FVSPEKRGSL (2141 aa). The span at 9–26 shows a compositional bias: low complexity; that stretch reads QQQQQQQQQQQQQQQQQQ. N-linked (GlcNAc...) asparagine glycans are attached at residues asparagine 77, asparagine 401, asparagine 508, asparagine 532, asparagine 641, asparagine 667, asparagine 778, asparagine 797, asparagine 874, and asparagine 980. Fibronectin type-III domains lie at 358–462 and 468–560; these read ETTQ…TPME and APII…SPLE. The Fibronectin type-III 3 domain maps to 838-938; that stretch reads PPAPRELRAL…APLATRTWPL (101 aa). The LDL-receptor class B repeat unit spans residues 1024–1066; that stretch reads GLLYWTDLARDCVQRLDPFSGERELLPIFGARHLALDSAQGHL. Fibronectin type-III domains follow at residues 1227–1317 and 1324–1430; these read LAVP…QLDT and QPRR…VQSV. Residues asparagine 1257, asparagine 1344, asparagine 1382, asparagine 1577, asparagine 1587, asparagine 1665, asparagine 1752, asparagine 1776, asparagine 1824, asparagine 1908, asparagine 1966, and asparagine 2088 are each glycosylated (N-linked (GlcNAc...) asparagine). Fibronectin type-III domains lie at 1711–1814, 1821–1920, 1922–2010, and 2014–2132; these read TAAA…TLHT, APRN…SYAP, PPLQ…TLGD, and APGR…AEPF. A helical membrane pass occupies residues 2142 to 2162; the sequence is VLAIIAPAAIVSSCVLALVLV. Residues 2163-2594 are Cytoplasmic-facing; that stretch reads RKLQKRRHRA…LYANEGISGL (432 aa). Residues 2224-2495 form the Protein kinase domain; that stretch reads LTLLRFLGSG…KRCLSTLQAL (272 aa). Residues 2230–2238 and lysine 2257 contribute to the ATP site; that span reads LGSGAFGEV. The active-site Proton acceptor is the aspartate 2355. Tyrosine 2391 carries the post-translational modification Phosphotyrosine; by autocatalysis. The tract at residues 2543–2568 is disordered; that stretch reads TVSTTDADTTGSPTTPTAPTTPTTTT. Over residues 2545–2568 the composition is skewed to low complexity; it reads STTDADTTGSPTTPTAPTTPTTTT.

It belongs to the protein kinase superfamily. Tyr protein kinase family. Insulin receptor subfamily.

The protein resides in the cell membrane. The enzyme catalyses L-tyrosyl-[protein] + ATP = O-phospho-L-tyrosyl-[protein] + ADP + H(+). Functionally, receptor for an extracellular signal required to instruct a cell to differentiate into a R7 photoreceptor. The ligand for Sev is the Boss (Bride of Sevenless) protein. This chain is Protein sevenless (sev), found in Drosophila virilis (Fruit fly).